The chain runs to 459 residues: MIKDPFARLGLDREVLTVSQLNGRARVLLEDVFSSIWVEGEISNLSRPASGHVYFTLKDSGAQVRCALFRQSAARVRQALKDGLQVKVRGKVSLFEGRGDYQLILDTVEPAGDGALRLAFDALKAKLSDEGLFSADRKVALPLHPQRIGIISSPTGAVIRDIISVFRRRAPRVELTLIPTAVQGREAINQIVRALKLADARGFDALILARGGGSLEDLWCFNEEAVARAIDACVTPIVSAVGHETDVSISDFVADVRAPTPSAAAELLAPDSSDLHRRVDNLHRRLVSRMQDRLMRERLRLEGISRRLRHPGERLRQQSQRLDDLDMRLRRAFEQSMHKKQVRLAHMESRLTAQHPGRTLAFLRQRLDALAERLPRAIREQIKVRKLQLQSQMQTLNVVSPLATLGRGYSILLDERGHAIRNAAQTQPGQRLTARLGEGELQVRVEDNHLTPVTLSLLD.

The protein belongs to the XseA family. Heterooligomer composed of large and small subunits.

The protein localises to the cytoplasm. It catalyses the reaction Exonucleolytic cleavage in either 5'- to 3'- or 3'- to 5'-direction to yield nucleoside 5'-phosphates.. Functionally, bidirectionally degrades single-stranded DNA into large acid-insoluble oligonucleotides, which are then degraded further into small acid-soluble oligonucleotides. The sequence is that of Exodeoxyribonuclease 7 large subunit from Pseudomonas syringae pv. tomato (strain ATCC BAA-871 / DC3000).